The following is a 579-amino-acid chain: General transcription and DNA repair factor IIH subunit TFB1-3 (579 aa).

BSD domains lie at 107–161 (LTPA…GKDS) and 186–238 (RTNR…YLYS).

This sequence belongs to the TFB1 family. In terms of assembly, component of the 7-subunit TFIIH core complex composed of XPB, XPD, TFB1/GTF2H1, GTF2H2/P44, TFB4/GTF2H3, TFB2/GTF2H4 and TFB5/GTF2H5, which is active in NER. The core complex associates with the 3-subunit CDK-activating kinase (CAK) module composed of CYCH1/cyclin H1, CDKD and MAT1/At4g30820 to form the 10-subunit holoenzyme (holo-TFIIH) active in transcription.

Its subcellular location is the nucleus. In terms of biological role, component of the general transcription and DNA repair factor IIH (TFIIH) core complex, which is involved in general and transcription-coupled nucleotide excision repair (NER) of damaged DNA and, when complexed to CAK, in RNA transcription by RNA polymerase II. In NER, TFIIH acts by opening DNA around the lesion to allow the excision of the damaged oligonucleotide and its replacement by a new DNA fragment. In transcription, TFIIH has an essential role in transcription initiation. When the pre-initiation complex (PIC) has been established, TFIIH is required for promoter opening and promoter escape. Phosphorylation of the C-terminal tail (CTD) of the largest subunit of RNA polymerase II by the kinase module CAK controls the initiation of transcription. This is General transcription and DNA repair factor IIH subunit TFB1-3 from Arabidopsis thaliana (Mouse-ear cress).